The following is a 596-amino-acid chain: Ferredoxin--nitrite reductase, chloroplastic (596 aa).

A chloroplast-targeting transit peptide spans 1–28; it reads MASSASLQRFLPPYPHAAASRCRPPGVR. A disordered region spans residues 1–56; sequence MASSASLQRFLPPYPHAAASRCRPPGVRARPVQSSTVSAPSSSTPAADEAVSAERL. Over residues 31–47 the composition is skewed to low complexity; it reads PVQSSTVSAPSSSTPAA. [4Fe-4S] cluster is bound by residues C474, C480, C515, and C519. Siroheme is bound at residue C519.

It belongs to the nitrite and sulfite reductase 4Fe-4S domain family. As to quaternary structure, monomer. Siroheme is required as a cofactor. Requires [4Fe-4S] cluster as cofactor.

Its subcellular location is the plastid. The protein localises to the chloroplast. It carries out the reaction 6 oxidized [2Fe-2S]-[ferredoxin] + NH4(+) + 2 H2O = nitrite + 6 reduced [2Fe-2S]-[ferredoxin] + 8 H(+). Its pathway is nitrogen metabolism; nitrate reduction (assimilation). Its function is as follows. Catalyzes the six-electron reduction of nitrite to ammonium. In Oryza sativa subsp. japonica (Rice), this protein is Ferredoxin--nitrite reductase, chloroplastic.